Consider the following 152-residue polypeptide: Large ribosomal subunit protein bL9 (152 aa).

This sequence belongs to the bacterial ribosomal protein bL9 family.

In terms of biological role, binds to the 23S rRNA. The polypeptide is Large ribosomal subunit protein bL9 (Nostoc sp. (strain PCC 7120 / SAG 25.82 / UTEX 2576)).